The sequence spans 139 residues: MKDGMRVGERFTHDFVVPPHKTVRHLYPESPEFAEFPEVFATGFMVGLMEWACVRAMAPYLEPGEGSLGTAICVTHTAATPPGLTVTVTAELRSVEGRRLSWRVSAHDGVDEIGSGTHERAVIHLEKFNAKVRQKTPAG.

Residues 40–50 and Gly69 each bind substrate; that span reads FATGFMVGLME. Catalysis depends on residues Thr42 and Glu50. CoA is bound by residues Gly69 and 76–77; that span reads HT. The active site involves His76. Substrate is bound at residue Arg120.

As to quaternary structure, homodimer.

It carries out the reaction fluoroacetyl-CoA + H2O = fluoroacetate + CoA + H(+). Hydrolyzes fluoroacetyl-CoA before it can react with citrate synthase, and thus confers fluoroacetate resistance. Cannot use acetyl-CoA as substrate. The protein is Fluoroacetyl-CoA thioesterase (flK) of Streptantibioticus cattleyicolor (Streptomyces cattleya).